We begin with the raw amino-acid sequence, 93 residues long: Antitoxin EndoAI (93 aa).

The protein belongs to the MazE/EndoAI family. As to quaternary structure, homodimer, forms a heterohexamer composed of alternating toxin and antitoxin homodimers which inhibits the toxin's endoribonuclease activity. Antitoxin prevents RNA binding to the endoribonuclease.

In terms of biological role, antitoxin component of a type II toxin-antitoxin (TA) system. Antitoxin that directly inhibits activity of EndoA in vitro. Upon expression in E.coli counteracts inhibitory effect of endoribonuclease EndoA. The EndoA-EndoAI complex does not seem to bind its own promoter. The chain is Antitoxin EndoAI from Bacillus subtilis (strain 168).